The chain runs to 218 residues: Ribose-5-phosphate isomerase A (218 aa).

Residues 28–31 (TGST), 81–84 (DGAD), and 94–97 (KGGG) contribute to the substrate site. Residue glutamate 103 is the Proton acceptor of the active site. Lysine 121 provides a ligand contact to substrate.

This sequence belongs to the ribose 5-phosphate isomerase family. In terms of assembly, homodimer.

It carries out the reaction aldehydo-D-ribose 5-phosphate = D-ribulose 5-phosphate. The protein operates within carbohydrate degradation; pentose phosphate pathway; D-ribose 5-phosphate from D-ribulose 5-phosphate (non-oxidative stage): step 1/1. Its function is as follows. Catalyzes the reversible conversion of ribose-5-phosphate to ribulose 5-phosphate. The sequence is that of Ribose-5-phosphate isomerase A from Vibrio campbellii (strain ATCC BAA-1116).